The primary structure comprises 102 residues: MAGKELERCQRQADQVTEIMLNNFDKVLERDGKLSELQQRSDQLLDMSSAFSKTTKTLAQQKRWENIRCRVYLGLAVAGGLLLILVVLLVIFLPSGEDSSKP.

The Cytoplasmic segment spans residues 1–72 (MAGKELERCQ…RWENIRCRVY (72 aa)). The 61-residue stretch at 5–65 (ELERCQRQAD…KTLAQQKRWE (61 aa)) folds into the v-SNARE coiled-coil homology domain. 3 positions are modified to phosphoserine: serine 41, serine 48, and serine 49. Residues 73-93 (LGLAVAGGLLLILVVLLVIFL) form a helical; Anchor for type IV membrane protein membrane-spanning segment. Residues 94–102 (PSGEDSSKP) are Vesicular-facing.

The protein belongs to the synaptobrevin family.

The protein localises to the cell membrane. Its subcellular location is the endomembrane system. The protein resides in the golgi apparatus. It localises to the trans-Golgi network membrane. In terms of biological role, may participate in trafficking events that are associated with myogenesis, such as myoblast fusion and/or GLUT4 trafficking. The chain is Vesicle-associated membrane protein 5 (Vamp5) from Rattus norvegicus (Rat).